Reading from the N-terminus, the 549-residue chain is Probable serine/threonine-protein kinase WNK5 (549 aa).

The 259-residue stretch at 25–283 (GRFREVLGKG…AKELLADPFL (259 aa)) folds into the Protein kinase domain. ATP contacts are provided by residues 105–108 (TELF) and Lys155. Residue Asp172 is the Proton acceptor of the active site. Residues 414–490 (ESFGHEDDED…SPAIDDDQNQ (77 aa)) are disordered. Residues 452–463 (DDSSNDVIPDMD) show a composition bias toward acidic residues. Over residues 467-476 (RSSNRLLNSS) the composition is skewed to low complexity. Ser504 is subject to Phosphoserine. Residues 525–549 (RGRGFDPNTNELQPQPSSTDFIRRC) form a disordered region. Positions 531 to 549 (PNTNELQPQPSSTDFIRRC) are enriched in polar residues.

The protein belongs to the protein kinase superfamily. Ser/Thr protein kinase family. WNK subfamily. Interacts with AHK4.

It catalyses the reaction L-seryl-[protein] + ATP = O-phospho-L-seryl-[protein] + ADP + H(+). The enzyme catalyses L-threonyl-[protein] + ATP = O-phospho-L-threonyl-[protein] + ADP + H(+). In terms of biological role, regulates flowering time by modulating the photoperiod pathway. The polypeptide is Probable serine/threonine-protein kinase WNK5 (WNK5) (Arabidopsis thaliana (Mouse-ear cress)).